A 1637-amino-acid chain; its full sequence is Acrosomal protein KIAA1210 (1637 aa).

Disordered regions lie at residues 44–121 (RFSS…LSIS), 141–293 (RTTT…KNEW), 341–404 (PTTT…KKKD), 438–759 (VCGE…SQSE), 865–896 (PKLP…EGST), 935–975 (SKYS…FQPL), 1017–1057 (LQPW…IPSQ), 1090–1137 (FPFQ…SRRA), 1182–1238 (SQTI…SKSF), and 1539–1558 (NKGD…PAFS). Residues 103 to 114 (HRSKSLKIKSQR) are compositionally biased toward basic residues. Residues 141 to 156 (RTTTTFRRRSSQCSST) show a composition bias toward low complexity. The span at 170 to 190 (SESSTQQFSGFSTPATSQGCL) shows a compositional bias: polar residues. Positions 229–249 (AKEKTTTKTKEAEQGEQKVDS) are enriched in basic and acidic residues. Low complexity predominate over residues 250 to 261 (TELSSQEQSSKT). A compositionally biased stretch (polar residues) spans 341-353 (PTTTEAEVTTVQK). Basic and acidic residues predominate over residues 355–374 (PSDKGDVERELADIDVEAQK). The segment covering 508–526 (TGETSSDSKSTSEYESSSE) has biased composition (low complexity). Residues 550 to 572 (ADDEEDGDDEKEEKDNDDDDEEN) are compositionally biased toward acidic residues. Residues 689–698 (DLSSSEQEQQ) show a composition bias toward low complexity. Polar residues-rich tracts occupy residues 745-759 (SPTQ…SQSE), 879-896 (GKQS…EGST), 935-956 (SKYS…STSA), 964-975 (SQPSVTPKFQPL), and 1017-1030 (LQPW…QVSV).

As to quaternary structure, interacts with TOP2B. As to expression, predominantly expressed in testis (at protein level).

The protein resides in the cytoplasmic vesicle. Its subcellular location is the secretory vesicle. It is found in the acrosome. In Mus musculus (Mouse), this protein is Acrosomal protein KIAA1210.